Reading from the N-terminus, the 90-residue chain is Probable oxaloacetate decarboxylase gamma chain 2 (90 aa).

The helical transmembrane segment at 10 to 32 (GINLLTLGMGFVFIFLIFLVYAT) threads the bilayer.

The protein belongs to the OadG family. As to quaternary structure, heterotrimer of an alpha, a beta and a gamma subunit. It depends on Na(+) as a cofactor.

The protein localises to the cell membrane. The enzyme catalyses oxaloacetate + 2 Na(+)(in) + H(+) = pyruvate + 2 Na(+)(out) + CO2. In terms of biological role, catalyzes the decarboxylation of oxaloacetate coupled to Na(+) translocation. The polypeptide is Probable oxaloacetate decarboxylase gamma chain 2 (oadG2) (Vibrio cholerae serotype O1 (strain ATCC 39315 / El Tor Inaba N16961)).